A 395-amino-acid chain; its full sequence is Elongation factor Tu (395 aa).

Residues 10–204 (KEHANIGTIG…AVDDYIPTPE (195 aa)) enclose the tr-type G domain. The tract at residues 19–26 (GHVDHGKT) is G1. 19–26 (GHVDHGKT) contributes to the GTP binding site. Residue Thr26 coordinates Mg(2+). Positions 60–64 (GITIN) are G2. Residues 81–84 (DCPG) form a G3 region. GTP is bound by residues 81 to 85 (DCPGH) and 136 to 139 (NKAD). Residues 136–139 (NKAD) form a G4 region. A G5 region spans residues 174 to 176 (SAL).

It belongs to the TRAFAC class translation factor GTPase superfamily. Classic translation factor GTPase family. EF-Tu/EF-1A subfamily. In terms of assembly, monomer.

It is found in the cytoplasm. The enzyme catalyses GTP + H2O = GDP + phosphate + H(+). GTP hydrolase that promotes the GTP-dependent binding of aminoacyl-tRNA to the A-site of ribosomes during protein biosynthesis. The polypeptide is Elongation factor Tu (Staphylococcus carnosus (strain TM300)).